The sequence spans 105 residues: Small ribosomal subunit protein uS10 (105 aa).

It belongs to the universal ribosomal protein uS10 family. Part of the 30S ribosomal subunit.

In terms of biological role, involved in the binding of tRNA to the ribosomes. This chain is Small ribosomal subunit protein uS10, found in Rickettsia massiliae (strain Mtu5).